Reading from the N-terminus, the 535-residue chain is Bifunctional purine biosynthesis protein PurH (535 aa).

The MGS-like domain occupies 6–151 (TRLPIRRALI…KNHKDVAIVV (146 aa)).

It belongs to the PurH family.

It carries out the reaction (6R)-10-formyltetrahydrofolate + 5-amino-1-(5-phospho-beta-D-ribosyl)imidazole-4-carboxamide = 5-formamido-1-(5-phospho-D-ribosyl)imidazole-4-carboxamide + (6S)-5,6,7,8-tetrahydrofolate. It catalyses the reaction IMP + H2O = 5-formamido-1-(5-phospho-D-ribosyl)imidazole-4-carboxamide. It functions in the pathway purine metabolism; IMP biosynthesis via de novo pathway; 5-formamido-1-(5-phospho-D-ribosyl)imidazole-4-carboxamide from 5-amino-1-(5-phospho-D-ribosyl)imidazole-4-carboxamide (10-formyl THF route): step 1/1. It participates in purine metabolism; IMP biosynthesis via de novo pathway; IMP from 5-formamido-1-(5-phospho-D-ribosyl)imidazole-4-carboxamide: step 1/1. This is Bifunctional purine biosynthesis protein PurH from Pseudomonas entomophila (strain L48).